The following is a 369-amino-acid chain: 4-hydroxy-3-methylbut-2-en-1-yl diphosphate synthase (flavodoxin) (369 aa).

Cys270, Cys273, Cys305, and Glu312 together coordinate [4Fe-4S] cluster.

This sequence belongs to the IspG family. [4Fe-4S] cluster is required as a cofactor.

The enzyme catalyses (2E)-4-hydroxy-3-methylbut-2-enyl diphosphate + oxidized [flavodoxin] + H2O + 2 H(+) = 2-C-methyl-D-erythritol 2,4-cyclic diphosphate + reduced [flavodoxin]. Its pathway is isoprenoid biosynthesis; isopentenyl diphosphate biosynthesis via DXP pathway; isopentenyl diphosphate from 1-deoxy-D-xylulose 5-phosphate: step 5/6. Its function is as follows. Converts 2C-methyl-D-erythritol 2,4-cyclodiphosphate (ME-2,4cPP) into 1-hydroxy-2-methyl-2-(E)-butenyl 4-diphosphate. In Haemophilus ducreyi (strain 35000HP / ATCC 700724), this protein is 4-hydroxy-3-methylbut-2-en-1-yl diphosphate synthase (flavodoxin).